We begin with the raw amino-acid sequence, 96 residues long: UPF0213 protein Lreu_0682 (96 aa).

Residues 4–81 (EKYYIYVLYC…KHQTRRQKEK (78 aa)) form the GIY-YIG domain.

Belongs to the UPF0213 family.

The protein is UPF0213 protein Lreu_0682 of Limosilactobacillus reuteri (strain DSM 20016) (Lactobacillus reuteri).